Reading from the N-terminus, the 334-residue chain is ADP-L-glycero-D-manno-heptose-6-epimerase (334 aa).

NADP(+)-binding positions include F11–I12, D32–N33, K39, K54, Q77–S81, and N94. Y141 (proton acceptor) is an active-site residue. Residue K145 participates in NADP(+) binding. Substrate is bound at residue N171. Residues V172 and K180 each coordinate NADP(+). The Proton acceptor role is filled by K180. Substrate contacts are provided by residues R182, H189, F203–N206, R216, and Y295.

This sequence belongs to the NAD(P)-dependent epimerase/dehydratase family. HldD subfamily. Homopentamer. The cofactor is NADP(+).

It catalyses the reaction ADP-D-glycero-beta-D-manno-heptose = ADP-L-glycero-beta-D-manno-heptose. It participates in nucleotide-sugar biosynthesis; ADP-L-glycero-beta-D-manno-heptose biosynthesis; ADP-L-glycero-beta-D-manno-heptose from D-glycero-beta-D-manno-heptose 7-phosphate: step 4/4. Its pathway is bacterial outer membrane biogenesis; LOS core biosynthesis. In terms of biological role, catalyzes the interconversion between ADP-D-glycero-beta-D-manno-heptose and ADP-L-glycero-beta-D-manno-heptose via an epimerization at carbon 6 of the heptose. This chain is ADP-L-glycero-D-manno-heptose-6-epimerase, found in Neisseria meningitidis serogroup B (strain ATCC BAA-335 / MC58).